The chain runs to 348 residues: Methylthioribose-1-phosphate isomerase (348 aa).

Substrate-binding positions include 46 to 48, Arg88, and Gln194; that span reads RGA. Asp235 acts as the Proton donor in catalysis. 245–246 is a binding site for substrate; sequence NK.

Belongs to the eIF-2B alpha/beta/delta subunits family. MtnA subfamily.

The enzyme catalyses 5-(methylsulfanyl)-alpha-D-ribose 1-phosphate = 5-(methylsulfanyl)-D-ribulose 1-phosphate. It participates in amino-acid biosynthesis; L-methionine biosynthesis via salvage pathway; L-methionine from S-methyl-5-thio-alpha-D-ribose 1-phosphate: step 1/6. Functionally, catalyzes the interconversion of methylthioribose-1-phosphate (MTR-1-P) into methylthioribulose-1-phosphate (MTRu-1-P). The sequence is that of Methylthioribose-1-phosphate isomerase from Desulforudis audaxviator (strain MP104C).